Consider the following 201-residue polypeptide: Ribosome maturation factor RimP (201 aa).

The protein belongs to the RimP family.

The protein localises to the cytoplasm. In terms of biological role, required for maturation of 30S ribosomal subunits. This is Ribosome maturation factor RimP from Acidiphilium cryptum (strain JF-5).